The chain runs to 197 residues: MTSLYLASGSPRRQELLAQLGVTFERIVTGIEEQRQPQESAQQYVVRLAREKARAGVAQTAKDLPVLGADTIVILNGEVLEKPRDAEHAAQMLRKLSGQTHQVMTAVALADSRHILDCLVVTDVTFRTLTDEDIAGYVASGEPLDKAGAYGIQGLGGCFVRKINGSYQAVVGLPLVETYELLSNFNALREKRDKHDG.

The active-site Proton acceptor is Asp-70.

Belongs to the Maf family. YhdE subfamily. It depends on a divalent metal cation as a cofactor.

It is found in the cytoplasm. The enzyme catalyses dTTP + H2O = dTMP + diphosphate + H(+). The catalysed reaction is UTP + H2O = UMP + diphosphate + H(+). Nucleoside triphosphate pyrophosphatase that hydrolyzes dTTP and UTP. May have a dual role in cell division arrest and in preventing the incorporation of modified nucleotides into cellular nucleic acids. This chain is dTTP/UTP pyrophosphatase (yhdE), found in Escherichia coli O157:H7.